Reading from the N-terminus, the 246-residue chain is 3'(2'),5'-bisphosphate nucleotidase CysQ (246 aa).

The Mg(2+) site is built by glutamate 64, aspartate 83, leucine 85, aspartate 86, and aspartate 205. Substrate is bound at residue glutamate 64. Substrate-binding positions include 85-88 and aspartate 205; that span reads LDGT.

Belongs to the inositol monophosphatase superfamily. CysQ family. The cofactor is Mg(2+).

It is found in the cell inner membrane. The catalysed reaction is adenosine 3',5'-bisphosphate + H2O = AMP + phosphate. With respect to regulation, inhibited by lithium and calcium. Functionally, converts adenosine-3',5'-bisphosphate (PAP) to AMP. May also convert adenosine 3'-phosphate 5'-phosphosulfate (PAPS) to adenosine 5'-phosphosulfate (APS). Has 10000-fold lower activity towards inositol 1,4-bisphosphate (Ins(1,4)P2). The polypeptide is 3'(2'),5'-bisphosphate nucleotidase CysQ (Escherichia coli (strain K12)).